The chain runs to 284 residues: Tropomyosin (284 aa).

A disordered region spans residues Met1–Glu41. Residues Met1–Tyr284 are a coiled coil. The segment covering Lys12–Glu41 has biased composition (basic and acidic residues).

It belongs to the tropomyosin family. In terms of assembly, homodimer.

Tropomyosin, in association with the troponin complex, plays a central role in the calcium dependent regulation of muscle contraction. The protein is Tropomyosin of Haemaphysalis longicornis (Bush tick).